The following is a 195-amino-acid chain: 2-hydroxychromene-2-carboxylate isomerase (195 aa).

The active-site Nucleophile is the S13. S13 provides a ligand contact to glutathione. Residues K45 and 55–56 (NR) each bind substrate. Residue 181–184 (WGND) coordinates glutathione.

It belongs to the GST superfamily. NadH family. Requires glutathione as cofactor.

It catalyses the reaction 2-hydroxychromene-2-carboxylate = (3E)-4-(2-hydroxyphenyl)-2-oxobut-3-enoate. With respect to regulation, activated by salicylate. Functionally, involved in the naphthalene and naphthalenesulfonate catabolic pathway. Catalyzes the reversible glutathione-dependent isomerization of 2-hydroxychromene-2-carboxylate (HCCA) to trans-O-hydroxybenzylidenepyruvate (THBPA). It can also use 2-hydroxybenzo[g]chromene-2-carboxylate as substrate. In Sphingobium xenophagum, this protein is 2-hydroxychromene-2-carboxylate isomerase (nsaD).